The chain runs to 288 residues: Solute carrier family 25 member 45 (288 aa).

3 Solcar repeats span residues 1–83 (MPVE…TLLV), 97–191 (PSYM…LCRQ), and 199–286 (PSSA…LLRW). Transmembrane regions (helical) follow at residues 6 to 26 (FVAG…FDTV), 63 to 83 (IASI…TLLV), 100 to 120 (MHIF…LAPF), 166 to 186 (GAWA…ITYE), 202 to 222 (ATVL…ATPL), and 266 to 286 (SARA…LLRW).

The protein belongs to the mitochondrial carrier (TC 2.A.29) family.

The protein localises to the mitochondrion inner membrane. The chain is Solute carrier family 25 member 45 (SLC25A45) from Homo sapiens (Human).